A 76-amino-acid chain; its full sequence is Liver-expressed antimicrobial peptide 2 (76 aa).

A signal peptide spans 1 to 22; the sequence is MLQLKLFAVLLTCLLLLGQVNS. The propeptide occupies 23–36; sequence SPVPEVSSAKRSRR. Disulfide bonds link cysteine 53–cysteine 64 and cysteine 59–cysteine 69.

It belongs to the LEAP2 family.

It is found in the secreted. Has an antimicrobial activity. This Mus musculus (Mouse) protein is Liver-expressed antimicrobial peptide 2 (Leap2).